Consider the following 405-residue polypeptide: Pyruvate decarboxylase 2 (405 aa).

Residues 232 to 314 (DSWFNCQKLK…FLINNGGYTI (83 aa)) form a thiamine pyrophosphate binding region. Asp-282, Asn-309, and Gly-311 together coordinate Mg(2+). Substrate is bound at residue Glu-315.

The protein belongs to the TPP enzyme family. In terms of assembly, homotetramer. It depends on a metal cation as a cofactor. The cofactor is thiamine diphosphate.

The catalysed reaction is a 2-oxocarboxylate + H(+) = an aldehyde + CO2. This Pisum sativum (Garden pea) protein is Pyruvate decarboxylase 2 (PDC2).